The primary structure comprises 514 residues: Ferrochelatase-2, chloroplastic (514 aa).

It belongs to the ferrochelatase family.

The protein resides in the plastid. Its subcellular location is the chloroplast. It catalyses the reaction heme b + 2 H(+) = protoporphyrin IX + Fe(2+). It functions in the pathway porphyrin-containing compound metabolism; protoheme biosynthesis; protoheme from protoporphyrin-IX: step 1/1. Functionally, catalyzes the ferrous insertion into protoporphyrin IX. This Cucumis sativus (Cucumber) protein is Ferrochelatase-2, chloroplastic (HEMH).